The following is a 729-amino-acid chain: Catalase-peroxidase (729 aa).

The segment at Met1 to Arg24 is disordered. The segment at residues Trp95 to Tyr217 is a cross-link (tryptophyl-tyrosyl-methioninium (Trp-Tyr) (with M-243)). The active-site Proton acceptor is His96. Positions Tyr217–Met243 form a cross-link, tryptophyl-tyrosyl-methioninium (Tyr-Met) (with W-95). His258 serves as a coordination point for heme b.

It belongs to the peroxidase family. Peroxidase/catalase subfamily. As to quaternary structure, homodimer or homotetramer. Requires heme b as cofactor. Post-translationally, formation of the three residue Trp-Tyr-Met cross-link is important for the catalase, but not the peroxidase activity of the enzyme.

The enzyme catalyses H2O2 + AH2 = A + 2 H2O. The catalysed reaction is 2 H2O2 = O2 + 2 H2O. In terms of biological role, bifunctional enzyme with both catalase and broad-spectrum peroxidase activity. The protein is Catalase-peroxidase of Nitrobacter winogradskyi (strain ATCC 25391 / DSM 10237 / CIP 104748 / NCIMB 11846 / Nb-255).